The primary structure comprises 884 residues: Telomerase reverse transcriptase (884 aa).

One can recognise a Reverse transcriptase domain in the interval 422–725; the sequence is CRNHNSYTLS…TVIQFCAMHI (304 aa). The Mg(2+) site is built by Asp-530, Asp-670, and Asp-671.

Belongs to the reverse transcriptase family. Telomerase subfamily. In terms of assembly, catalytic subunit of the telomerase holoenzyme complex composed minimally of EST2 and the telomerase RNA template component.

The protein localises to the nucleus. It is found in the chromosome. The protein resides in the telomere. The catalysed reaction is DNA(n) + a 2'-deoxyribonucleoside 5'-triphosphate = DNA(n+1) + diphosphate. Telomerase is a ribonucleoprotein enzyme essential for the replication of chromosome termini in most eukaryotes. It elongates telomeres. It is a reverse transcriptase that adds simple sequence repeats to chromosome ends by copying a template sequence within the RNA component of the enzyme. The polypeptide is Telomerase reverse transcriptase (EST2) (Saccharomyces cerevisiae (strain ATCC 204508 / S288c) (Baker's yeast)).